The chain runs to 456 residues: Adenylosuccinate lyase (456 aa).

Residues 15–16 (RY), 90–92 (NHD), and 122–123 (TS) contribute to the N(6)-(1,2-dicarboxyethyl)-AMP site. Histidine 171 serves as the catalytic Proton donor/acceptor. Glutamine 247 contacts N(6)-(1,2-dicarboxyethyl)-AMP. The active-site Proton donor/acceptor is serine 295. N(6)-(1,2-dicarboxyethyl)-AMP is bound by residues serine 296, 301-303 (KIN), asparagine 309, arginine 335, and 340-344 (STVLR).

The protein belongs to the lyase 1 family. Adenylosuccinate lyase subfamily. In terms of assembly, homotetramer. Residues from neighboring subunits contribute catalytic and substrate-binding residues to each active site.

The catalysed reaction is N(6)-(1,2-dicarboxyethyl)-AMP = fumarate + AMP. The enzyme catalyses (2S)-2-[5-amino-1-(5-phospho-beta-D-ribosyl)imidazole-4-carboxamido]succinate = 5-amino-1-(5-phospho-beta-D-ribosyl)imidazole-4-carboxamide + fumarate. It functions in the pathway purine metabolism; AMP biosynthesis via de novo pathway; AMP from IMP: step 2/2. The protein operates within purine metabolism; IMP biosynthesis via de novo pathway; 5-amino-1-(5-phospho-D-ribosyl)imidazole-4-carboxamide from 5-amino-1-(5-phospho-D-ribosyl)imidazole-4-carboxylate: step 2/2. Its function is as follows. Catalyzes two reactions in de novo purine nucleotide biosynthesis. Catalyzes the breakdown of 5-aminoimidazole- (N-succinylocarboxamide) ribotide (SAICAR or 2-[5-amino-1-(5-phospho-beta-D-ribosyl)imidazole-4-carboxamido]succinate) to 5-aminoimidazole-4-carboxamide ribotide (AICAR or 5-amino-1-(5-phospho-beta-D-ribosyl)imidazole-4-carboxamide) and fumarate, and of adenylosuccinate (ADS or N(6)-(1,2-dicarboxyethyl)-AMP) to adenosine monophosphate (AMP) and fumarate. The polypeptide is Adenylosuccinate lyase (purB) (Buchnera aphidicola subsp. Schizaphis graminum (strain Sg)).